The sequence spans 312 residues: Olfactory receptor-like protein COR6 (312 aa).

At 1 to 26 the chain is on the extracellular side; the sequence is MASGNCTTPTTFILSGLTDNPGLQMP. Asn5 carries N-linked (GlcNAc...) asparagine glycosylation. Residues 27–49 traverse the membrane as a helical segment; it reads LFMVFLAIYTITLLTNLGLIALI. The Cytoplasmic portion of the chain corresponds to 50–57; sequence SIDLQLQT. The chain crosses the membrane as a helical span at residues 58-79; that stretch reads PMYIFLQNLSFTDAVYSTVITP. The Extracellular segment spans residues 80-100; that stretch reads KMLATFLEETKTISYVGCILQ. A disulfide bond links Cys97 and Cys179. A helical membrane pass occupies residues 101-120; it reads YFSFVLLTVRECLLLAVMAY. Over 121–139 the chain is Cytoplasmic; the sequence is DRYAAICKPLLYPAIMTKA. Residues 140–164 traverse the membrane as a helical segment; sequence VCWRLVKGLYSLAFLNFLVHTSGLL. At 165–205 the chain is on the extracellular side; that stretch reads KLSFCSSNVVNHFFCDNSPLFQISSSSTALNELLVFIFGSL. A helical transmembrane segment spans residues 206–226; sequence FVMSSIITILISYVFIILTVV. The Cytoplasmic segment spans residues 227–239; that stretch reads RIRSKERKYKAFS. The chain crosses the membrane as a helical span at residues 240 to 260; it reads TCTSHLMAVSLFHGTIVFMYF. At 261–271 the chain is on the extracellular side; sequence QPANNFSLDKD. Residues 272–292 form a helical membrane-spanning segment; that stretch reads KIMSLFYTVVIPMLNPLIYSW. Over 293 to 312 the chain is Cytoplasmic; sequence RNKEVKDALHRAIATAVLFH.

This sequence belongs to the G-protein coupled receptor 1 family.

It localises to the cell membrane. Odorant receptor. This Gallus gallus (Chicken) protein is Olfactory receptor-like protein COR6 (COR6).